The sequence spans 418 residues: Inner capsid protein sigma-2 (418 aa).

It belongs to the orthoreovirus sigma-1 protein family. In terms of assembly, interacts with protein mu-NS; in viral inclusions.

The protein resides in the virion. Its function is as follows. Inner capsid (core) component. This Mammalia (T2J) protein is Inner capsid protein sigma-2 (S2).